Consider the following 853-residue polypeptide: Envelope glycoprotein gp160 (853 aa).

A signal peptide spans 1–32 (MRVKEKYQHLWRWGWKWGIMLLGILMICSATE). Residues 33–682 (NLWVTVYYGV…ITNWLWYIKI (650 aa)) lie on the Extracellular side of the membrane. Cysteines 54 and 74 form a disulfide. N88, N136, N141, N156, N160, N186, N195, N232, N239, N260, N274, N287, N293, N299, N330, and N354 each carry an N-linked (GlcNAc...) asparagine; by host glycan. 5 cysteine pairs are disulfide-bonded: C119/C203, C126/C194, C131/C157, C216/C245, and C226/C237. Residues 131 to 156 (CTDLKNDTNTNSSNGRMIMEKGEIKN) form a V1 region. Residues 157–194 (CSFNISTSIRNKVQKEYAFFYKLDIRPIDNTTYRLISC) form a V2 region. Positions 294-328 (CTRPNNNTRKSIRIQRGPGRAFVTIGKIGNMRQAH) are V3. C294 and C329 form a disulfide bridge. Positions 362–372 (SSGGDPEIVTH) are CD4-binding loop. Disulfide bonds link C376/C443 and C383/C416. A V4 region spans residues 383–416 (CNSTQLFNSTWFNSTWSTEGSNNTEGSDTITLPC). N384, N390, N395, N404, N446, and N461 each carry an N-linked (GlcNAc...) asparagine; by host glycan. V5 regions lie at residues 459 to 469 (NTNESEVFRPG) and 461 to 469 (NESEVFRPG). The interval 510–530 (AVGIGALFLGFLGAAGSTMGA) is fusion peptide. The segment at 572–590 (KQLQARILAVERYLKDQQL) is immunosuppression. A disulfide bridge links C596 with C602. N-linked (GlcNAc...) asparagine; by host glycans are attached at residues N609, N614, N623, N635, and N672. Residues 631–665 (REINNYTSLIHSLIDESQNQQEKNEQELLELDKWA) are a coiled coil. The tract at residues 660 to 681 (ELDKWASLWNWFNITNWLWYIK) is MPER; binding to GalCer. A helical transmembrane segment spans residues 683–703 (FIMIVGGLVGLRIVFAVLSIV). The Cytoplasmic segment spans residues 704-853 (NRVRQGYSPL…RIRQGLERIL (150 aa)). The YXXL motif; contains endocytosis signal motif lies at 710–713 (YSPL). The interval 717–741 (THLPNRGGPDRPEGIEEEGGERDRD) is disordered. C762 carries the S-palmitoyl cysteine; by host lipid modification.

Belongs to the HIV-1 env protein family. As to quaternary structure, the mature envelope protein (Env) consists of a homotrimer of non-covalently associated gp120-gp41 heterodimers. The resulting complex protrudes from the virus surface as a spike. There seems to be as few as 10 spikes on the average virion. Interacts with host CD4, CCR5 and CXCR4. Gp120 also interacts with the C-type lectins CD209/DC-SIGN and CLEC4M/DC-SIGNR (collectively referred to as DC-SIGN(R)). Gp120 and gp41 interact with GalCer. Gp120 interacts with host ITGA4/ITGB7 complex; on CD4+ T-cells, this interaction results in rapid activation of integrin ITGAL/LFA-1, which facilitates efficient cell-to-cell spreading of HIV-1. Gp120 interacts with cell-associated heparan sulfate; this interaction increases virus infectivity on permissive cells and may be involved in infection of CD4- cells. In terms of assembly, the mature envelope protein (Env) consists of a homotrimer of non-covalently associated gp120-gp41 heterodimers. The resulting complex protrudes from the virus surface as a spike. There seems to be as few as 10 spikes on the average virion. Highly glycosylated by host. The high number of glycan on the protein is reffered to as 'glycan shield' because it contributes to hide protein sequence from adaptive immune system. Post-translationally, palmitoylation of the transmembrane protein and of Env polyprotein (prior to its proteolytic cleavage) is essential for their association with host cell membrane lipid rafts. Palmitoylation is therefore required for envelope trafficking to classical lipid rafts, but not for viral replication. In terms of processing, specific enzymatic cleavages in vivo yield mature proteins. Envelope glycoproteins are synthesized as an inactive precursor that is heavily N-glycosylated and processed likely by host cell furin in the Golgi to yield the mature SU and TM proteins. The cleavage site between SU and TM requires the minimal sequence [KR]-X-[KR]-R. About 2 of the 9 disulfide bonds of gp41 are reduced by P4HB/PDI, following binding to CD4 receptor.

It is found in the virion membrane. The protein localises to the host cell membrane. It localises to the host endosome membrane. Its function is as follows. Oligomerizes in the host endoplasmic reticulum into predominantly trimers. In a second time, gp160 transits in the host Golgi, where glycosylation is completed. The precursor is then proteolytically cleaved in the trans-Golgi and thereby activated by cellular furin or furin-like proteases to produce gp120 and gp41. Functionally, attaches the virus to the host lymphoid cell by binding to the primary receptor CD4. This interaction induces a structural rearrangement creating a high affinity binding site for a chemokine coreceptor like CXCR4 and/or CCR5. Acts as a ligand for CD209/DC-SIGN and CLEC4M/DC-SIGNR, which are respectively found on dendritic cells (DCs), and on endothelial cells of liver sinusoids and lymph node sinuses. These interactions allow capture of viral particles at mucosal surfaces by these cells and subsequent transmission to permissive cells. HIV subverts the migration properties of dendritic cells to gain access to CD4+ T-cells in lymph nodes. Virus transmission to permissive T-cells occurs either in trans (without DCs infection, through viral capture and transmission), or in cis (following DCs productive infection, through the usual CD4-gp120 interaction), thereby inducing a robust infection. In trans infection, bound virions remain infectious over days and it is proposed that they are not degraded, but protected in non-lysosomal acidic organelles within the DCs close to the cell membrane thus contributing to the viral infectious potential during DCs' migration from the periphery to the lymphoid tissues. On arrival at lymphoid tissues, intact virions recycle back to DCs' cell surface allowing virus transmission to CD4+ T-cells. In terms of biological role, acts as a class I viral fusion protein. Under the current model, the protein has at least 3 conformational states: pre-fusion native state, pre-hairpin intermediate state, and post-fusion hairpin state. During fusion of viral and target intracellular membranes, the coiled coil regions (heptad repeats) assume a trimer-of-hairpins structure, positioning the fusion peptide in close proximity to the C-terminal region of the ectodomain. The formation of this structure appears to drive apposition and subsequent fusion of viral and target cell membranes. Complete fusion occurs in host cell endosomes and is dynamin-dependent, however some lipid transfer might occur at the plasma membrane. The virus undergoes clathrin-dependent internalization long before endosomal fusion, thus minimizing the surface exposure of conserved viral epitopes during fusion and reducing the efficacy of inhibitors targeting these epitopes. Membranes fusion leads to delivery of the nucleocapsid into the cytoplasm. This Human immunodeficiency virus type 1 group M subtype B (isolate MFA) (HIV-1) protein is Envelope glycoprotein gp160.